The sequence spans 347 residues: Merozoite surface protein P12 (347 aa).

An N-terminal signal peptide occupies residues 1 to 25 (MIKLSKKYCLGISFVLYILLSVCEG). 2 consecutive 6-Cys domains span residues 27 to 172 (KNLT…IPSL) and 175 to 305 (KVKG…ISSS). Asn28 is a glycosylation site (N-linked (GlcNAc...) asparagine). 3 disulfide bridges follow: Cys31/Cys53, Cys67/Cys138, and Cys81/Cys136. Asn147, Asn200, Asn228, Asn242, Asn265, and Asn322 each carry an N-linked (GlcNAc...) asparagine glycan. 3 disulfides stabilise this stretch: Cys179/Cys211, Cys225/Cys286, and Cys236/Cys284. A lipid anchor (GPI-anchor amidated asparagine) is attached at Asn322. Residues 323–347 (SSFLTLSSYCAFITFIITSFLSFIL) constitute a propeptide, removed in mature form.

Heterodimer; heterodimerizes with PF41. May form an antiparallel heterodimer with PF41. In terms of processing, processed into a soluble form.

Its subcellular location is the cell surface. It is found in the cell membrane. In Plasmodium falciparum (isolate 3D7), this protein is Merozoite surface protein P12 (PF12).